We begin with the raw amino-acid sequence, 4555 residues long: Protocadherin Fat 3 (4555 aa).

Residues 1-31 (MGVTMRHCIDTRPPSCLIFLLLKLCATVSQG) form the signal peptide. Residues 32–4153 (LPGTGPLGFH…AGHSYVGKEE (4122 aa)) are Extracellular-facing. 33 Cadherin domains span residues 43-157 (THAL…RPLF), 158-265 (SPTT…APII), 263-374 (PIIH…TPIK), 376-471 (EKDV…TPEF), 472-577 (QETL…SPLF), 578-680 (EKVA…SKSF), 726-830 (KSFP…SPVF), 831-935 (LQDS…SPAF), 936-1042 (IPSS…TPYF), 1043-1147 (PDFA…APLT), 1148-1253 (SEPI…KPQF), 1254-1358 (PEKV…SPIP), 1362-1459 (DEPF…GPEF), 1460-1565 (SQPH…SPYF), 1566-1768 (TNPL…PPVF), 1769-1882 (LFSQ…PPVF), 1883-1985 (TQAV…TQSF), 1982-2083 (TQSF…SPVF), 2084-2185 (VGLP…MPVF), 2186-2286 (DKPF…PPVF), 2287-2393 (DQPT…PPVF), 2394-2495 (NQLI…SPAF), 2496-2599 (SQST…APQF), 2600-2707 (MTLE…LPSF), 2708-2813 (TQSQ…KPVF), 2814-2923 (ETSS…APVF), 2924-3028 (AHEV…SPVC), 3029-3130 (DQVA…PPVF), 3131-3235 (SSNH…PPVF), 3236-3340 (ERRD…PPRF), 3341-3445 (SQDV…SPVF), 3446-3550 (TPAN…KPTA), and 3551-3652 (IPLE…TIRF). A glycan (N-linked (GlcNAc...) asparagine) is linked at N48. An N-linked (GlcNAc...) asparagine glycan is attached at N341. N-linked (GlcNAc...) asparagine glycans are attached at residues N481, N562, N667, N799, N879, N898, and N1006. N1367 and N1429 each carry an N-linked (GlcNAc...) asparagine glycan. N1751 carries N-linked (GlcNAc...) asparagine glycosylation. Residues N1944, N1993, and N1996 are each glycosylated (N-linked (GlcNAc...) asparagine). Residues N2208, N2292, N2331, and N2467 are each glycosylated (N-linked (GlcNAc...) asparagine). An N-linked (GlcNAc...) asparagine glycan is attached at N2734. Residue N3000 is glycosylated (N-linked (GlcNAc...) asparagine). A glycan (N-linked (GlcNAc...) asparagine) is linked at N3201. 3 N-linked (GlcNAc...) asparagine glycosylation sites follow: N3449, N3618, and N3741. The EGF-like 1 domain maps to 3794 to 3832 (SNDPCVEKPCPEDMQCVGYEASRRPFLCQCPPGKLGECS). Disulfide bonds link C3798–C3809, C3803–C3821, and C3823–C3831. The Laminin G-like domain maps to 3834 to 4017 (HTSLSFAGNS…VGLTELKLGC (184 aa)). N-linked (GlcNAc...) asparagine glycosylation is present at N3926. Disulfide bonds link C3984/C4017, C4024/C4035, C4029/C4045, C4047/C4056, C4063/C4074, C4068/C4083, C4085/C4094, C4101/C4112, C4106/C4121, and C4123/C4132. 2 EGF-like domains span residues 4020-4057 (YPDACQRSPCLHGGSCSGLPSGGYQCSCLSQFTGTNCE) and 4059-4095 (EITACFPNPCRNGGSCDPIGNTFICSCKAGLTGVTCE). Residues 4097-4133 (DVDECEREECENGGSCVNLFGSFFCNCTPGYVGQYCG) enclose the EGF-like 4; calcium-binding domain. Residues 4154 to 4174 (LIGIAVVLFVIFTLIVLFIVF) traverse the membrane as a helical segment. Topologically, residues 4175-4555 (RKKVFRKNYS…FVETQHQTQV (381 aa)) are cytoplasmic. The segment covering 4326–4343 (SNKGSNSEVQSLNSFQSD) has biased composition (polar residues). Disordered stretches follow at residues 4326-4347 (SNKGSNSEVQSLNSFQSDSGDD), 4395-4424 (GGYDIDSEYPPPHEEEFLSQDQLPPPLPED), and 4452-4472 (PRFHPSQYLPPHPLPGETDLG). Residues R4508 and R4518 each carry the omega-N-methylarginine modification.

As to expression, restricted to the nervous system. Abundantly expressed in the fetal brain.

It localises to the membrane. May play a role in the interactions between neurites derived from specific subsets of neurons during development. The polypeptide is Protocadherin Fat 3 (Fat3) (Rattus norvegicus (Rat)).